Consider the following 441-residue polypeptide: Peroxisome proliferator-activated receptor delta (441 aa).

The span at 1–22 shows a compositional bias: acidic residues; that stretch reads MEQPQEEAPEVREEEEKEEVAE. Residues 1–54 are disordered; sequence MEQPQEEAPEVREEEEKEEVAEAEGAPELNGGPQHALPSSSYTDLSRSSSPPSL. The span at 37–54 shows a compositional bias: low complexity; that stretch reads LPSSSYTDLSRSSSPPSL. The nuclear receptor DNA-binding region spans 71–145; that stretch reads NMECRVCGDK…LGMSHNAIRF (75 aa). NR C4-type zinc fingers lie at residues 74–94 and 111–133; these read CRVC…CEGC and CERS…FQKC. Residues 211–439 form the NR LBD domain; sequence FVIHDIETLW…HPLLQEIYKD (229 aa).

The protein belongs to the nuclear hormone receptor family. NR1 subfamily. As to quaternary structure, heterodimer with the retinoid X receptor. Interacts (via domain NR LBD) with CRY1 and CRY2 in a ligand-dependent manner. In terms of processing, 'Lys-48'-linked polyubiquitinated; leading to proteasomal degradation. Deubiquitinated and stabilized by OTUD3. Ubiquitous with maximal levels in placenta and skeletal muscle.

Its subcellular location is the nucleus. Its function is as follows. Ligand-activated transcription factor key mediator of energy metabolism in adipose tissues. Receptor that binds peroxisome proliferators such as hypolipidemic drugs and fatty acids. Has a preference for poly-unsaturated fatty acids, such as gamma-linoleic acid and eicosapentanoic acid. Once activated by a ligand, the receptor binds to promoter elements of target genes. Regulates the peroxisomal beta-oxidation pathway of fatty acids. Functions as transcription activator for the acyl-CoA oxidase gene. Decreases expression of NPC1L1 once activated by a ligand. The chain is Peroxisome proliferator-activated receptor delta from Homo sapiens (Human).